A 106-amino-acid polypeptide reads, in one-letter code: Large ribosomal subunit protein eL42 (106 aa).

The protein belongs to the eukaryotic ribosomal protein eL42 family.

This chain is Large ribosomal subunit protein eL42 (RPL44), found in Eremothecium gossypii (strain ATCC 10895 / CBS 109.51 / FGSC 9923 / NRRL Y-1056) (Yeast).